A 120-amino-acid chain; its full sequence is FK506-binding protein 1B (120 aa).

The tract at residues 1–26 (MGLEKQTLRMGNGKDHPQPGDPVELN) is disordered. Residues 20-115 (GDPVELNYTG…VFEVELLKIK (96 aa)) form the PPIase FKBP-type domain.

Belongs to the FKBP-type PPIase family. FKBP1 subfamily.

It catalyses the reaction [protein]-peptidylproline (omega=180) = [protein]-peptidylproline (omega=0). With respect to regulation, inhibited by both FK506 and rapamycin. Functionally, PPIases accelerate the folding of proteins. It catalyzes the cis-trans isomerization of proline imidic peptide bonds in oligopeptides. This chain is FK506-binding protein 1B (fpr1B), found in Aspergillus fumigatus (strain ATCC MYA-4609 / CBS 101355 / FGSC A1100 / Af293) (Neosartorya fumigata).